Here is a 1469-residue protein sequence, read N- to C-terminus: ABC transporter G family member 36 (1469 aa).

An N-acetylmethionine modification is found at methionine 1. A phosphoserine mark is found at serine 37, serine 38, and serine 40. Threonine 43 is subject to Phosphothreonine. Serine 45 bears the Phosphoserine mark. Residues 171–444 form the ABC transporter 1 domain; the sequence is LGMIGIQFAK…FESFGFKCPE (274 aa). 204–211 contacts ATP; the sequence is GPPSSGKT. In terms of domain architecture, ABC transmembrane type-2 1 spans 522–735; it reads ELLKSCWDKE…AFNGLVVNEM (214 aa). The next 7 helical transmembrane spans lie at 540-560, 575-595, 621-641, 659-679, 685-705, 713-733, and 772-792; these read FFYV…STLF, LYIG…FAEM, LPTF…WMVV, FLLV…IASV, IANT…GFLL, WWGW…LVVN, and ISVG…TLAL. The disordered stretch occupies residues 806–852; it reads PEEENEDADQGKDPMRRSLSTADGNRRGEVAMGRMSRDSAAEASGGA. Phosphoserine occurs at positions 825, 841, and 844. A compositionally biased stretch (basic and acidic residues) spans 829-845; that stretch reads GNRRGEVAMGRMSRDSA. The 253-residue stretch at 867 to 1119 folds into the ABC transporter 2 domain; that stretch reads MSFDDVKYFV…KVVEYFESFP (253 aa). An ATP-binding site is contributed by 912–919; sequence GVSGAGKT. An ABC transmembrane type-2 2 domain is found at 1192–1406; sequence GQFKSCLWKQ…TVYGLIVSQY (215 aa). The next 7 membrane-spanning stretches (helical) occupy residues 1216 to 1236, 1239 to 1259, 1299 to 1319, 1326 to 1346, 1356 to 1376, 1384 to 1404, and 1441 to 1461; these read FIFT…IGGN, NAGD…FVGI, LPYV…MVGF, FFWF…YGMM, VASI…GFFI, WWIW…LIVS, and PVAA…AFCI.

It belongs to the ABC transporter superfamily. ABCG family. PDR (TC 3.A.1.205) subfamily. Interacts, in a Ca(2+)-dependent manner, with calmodulins CaM3, CaM7 and several CaM-like proteins (CML8, CML9, CML12/CAL4, CML37 and CML38), as well as with calcium regulated proteins CBL4/SOS3 and KIC. Phosphorylated upon perception of pathogen-associated molecular patterns (PAMPs); phosphorylations at Ser-40 and Ser-45, which likely regulate transport activity, are required for plant defense against pathogens (e.g. Blumeria graminis), but dispensable for recruitment to the host-pathogen interface and penetration sites. Phosphorylation at Ser-841 seems to be required for protein stability. As to expression, ubiquitous (at protein level). Higher levels in root hairs, stomata, epidermal cells, and hydathodes. Concentrated at the infection site of infected plants, including papillae and haustoria. Accumulates at the periphery of lateral root cap and root epidermal cells, especially in the outer lateral membrane domain facing the environment.

It localises to the cell membrane. The protein resides in the golgi apparatus. It is found in the trans-Golgi network membrane. Its subcellular location is the endoplasmic reticulum membrane. Its function is as follows. Together with ABCG37, regulates auxin homeostasis and responses by playing a dual role in coumarin (e.g. esculin) and in the auxin precursor indole 3-butyric acid (IBA) efflux transport, thus influencing cotyledons, roots and root hairs development. Mediates the transport (export into the apoplast) of distinct indole-type metabolites in distinct biological processes; a precursor of 4-O-beta-D-glucosyl-indol-3-yl formamide (4OGlcI3F), a pathogen-inducible tryptophan-derived compound (e.g. upon Blumeria graminis conidiospore inoculation), being a probable substrate in extracellular pathogen defense. Involved in the cellular detoxification of xenobiotics by promoting the excretion of some auxinic herbicides including 4-(2,4-dichlorophenoxy)butyric acid (2,4-DB) and other members of the phenoxyalkanoic acid family but not 2,4-dichlorophenoxyacetic acid (2,4-D). Mediates thymidine exudation in the rhizosphere. May be a transporter of lignin precursors during tracheary element differentiation. Key factor that controls the extent of cell death in the defense response. Necessary for both callose deposition and glucosinolate activation in response to pathogens. As a central component of nonhost resistance (NHR), required for limiting invasion by nonadapted pathogens including powdery mildews (e.g. Blumeria graminis and Erysiphe pisi), root-penetrating pathogenic fungi (e.g. Fusarium oxysporum), Phakopsora pachyrhizi and Colletotrichum gloeosporioides (anthracnose fungi), probably by sensing Ca(2+) via interactions with calmodulins (e.g. CaM7). Confers resistance to cadmium (Cd) and lead (Pb), probably as an efflux pump of Cd2+ or Cd conjugates, and possibly, of chemicals that mediate pathogen resistance. Promotes resistance to abiotic stresses (e.g. drought and salt stress) and favors general growth by preventing sodium accumulation in plants. Required for microbe-associated molecular patterns (MAMPs)- and salicylic acid (SA)-dependent hypersensitive cell death (HR), involving indole glucosinolate breakdown products (e.g. indole-3-acetonitrile), probably in a PEN2 myrosinase-dependent metabolic pathway, triggered by the recognition of effectors from incompatible pathogens including oomycetes and bacteria (e.g. AvrRpm1 and AvrRps4) and benzothiadiazole- (BTH), and leading to an induced protection against pathogens (e.g. Pseudomonas syringae pv. tomato DC3000, Golovinomyces orontii and Hyaloperonospora arabidopsidis). The protein is ABC transporter G family member 36 of Arabidopsis thaliana (Mouse-ear cress).